The primary structure comprises 305 residues: UDP-3-O-acyl-N-acetylglucosamine deacetylase (305 aa).

The Zn(2+) site is built by His-79, His-238, and Asp-242. The active-site Proton donor is the His-265.

Belongs to the LpxC family. The cofactor is Zn(2+).

The enzyme catalyses a UDP-3-O-[(3R)-3-hydroxyacyl]-N-acetyl-alpha-D-glucosamine + H2O = a UDP-3-O-[(3R)-3-hydroxyacyl]-alpha-D-glucosamine + acetate. It participates in glycolipid biosynthesis; lipid IV(A) biosynthesis; lipid IV(A) from (3R)-3-hydroxytetradecanoyl-[acyl-carrier-protein] and UDP-N-acetyl-alpha-D-glucosamine: step 2/6. In terms of biological role, catalyzes the hydrolysis of UDP-3-O-myristoyl-N-acetylglucosamine to form UDP-3-O-myristoylglucosamine and acetate, the committed step in lipid A biosynthesis. In Salmonella arizonae (strain ATCC BAA-731 / CDC346-86 / RSK2980), this protein is UDP-3-O-acyl-N-acetylglucosamine deacetylase.